Here is a 311-residue protein sequence, read N- to C-terminus: N-acetylmuramic acid 6-phosphate etherase (311 aa).

The 164-residue stretch at 66–229 (VADRMARGGR…STITMIRLGK (164 aa)) folds into the SIS domain. The active-site Proton donor is the Glu-94. Glu-125 is an active-site residue.

Belongs to the GCKR-like family. MurNAc-6-P etherase subfamily. In terms of assembly, homodimer.

The enzyme catalyses N-acetyl-D-muramate 6-phosphate + H2O = N-acetyl-D-glucosamine 6-phosphate + (R)-lactate. It participates in amino-sugar metabolism; N-acetylmuramate degradation. Functionally, specifically catalyzes the cleavage of the D-lactyl ether substituent of MurNAc 6-phosphate, producing GlcNAc 6-phosphate and D-lactate. The sequence is that of N-acetylmuramic acid 6-phosphate etherase from Streptomyces avermitilis (strain ATCC 31267 / DSM 46492 / JCM 5070 / NBRC 14893 / NCIMB 12804 / NRRL 8165 / MA-4680).